The primary structure comprises 210 residues: Late transcription elongation factor OPG110 (210 aa).

Residues 25–36 (RNSAENKDKNED) are compositionally biased toward basic and acidic residues. The tract at residues 25–102 (RNSAENKDKN…PPPSSSPGVG (78 aa)) is disordered. Residues 49 to 68 (PKTKRTTTPRKPAATKRSTK) show a composition bias toward basic residues.

The protein belongs to the orthopoxvirus OPG110 family. In terms of assembly, interacts with the DNA polymerase processivity factor A20. Interacts with B1R kinase. Interacts with the late transcription factors VLTF-1 and VLTF-3. Interacts with the late transcription elongation factor G2. Interacts with itself. Might be part of a transcription complex composed at least of G2, A18, and H5. Post-translationally, phosphorylated at multiple sites. Phosphorylation is necessary for cleavage activity. Phosphorylated by the viral B1R and F10 kinases.

The protein resides in the virion. Its subcellular location is the host cytoplasm. Involved in the co-transcriptional or post-transcriptional endoribonucleolytic cleavage that generates sequence-homogeneous 3' ends during late transcription. Involved in postreplicative transcription elongation on intermediate and late genes. Also involved in DNA replication and in multiple steps of virion morphogenesis. Required both for inclusion of virosoplasm into crescents as well as for maturation of immature virions (IV) into mature virions (MV). This chain is Late transcription elongation factor OPG110 (OPG110), found in Cynomys gunnisoni (Gunnison's prairie dog).